The following is a 289-amino-acid chain: Phosphatidylglycerol--prolipoprotein diacylglyceryl transferase (289 aa).

A run of 4 helical transmembrane segments spans residues 18–38, 54–74, 86–106, and 116–136; these read FTIYWYGVLIGLGVIIGYVMA, DFVMYVIPVAIIFARLYYVIF, VFYIWEGGLAIHGALIGGVLT, and LSFWQLMDVAAPSILIGQAIG. Arg137 lines the a 1,2-diacyl-sn-glycero-3-phospho-(1'-sn-glycerol) pocket. Transmembrane regions (helical) follow at residues 177–197, 205–225, and 236–256; these read HPTFLYESIWNFIGVVVLLLL, GELFFSYLIWYSIGRFFIEGM, and LRTAQIVSILLIVGALLLWWY.

This sequence belongs to the Lgt family.

The protein resides in the cell membrane. The catalysed reaction is L-cysteinyl-[prolipoprotein] + a 1,2-diacyl-sn-glycero-3-phospho-(1'-sn-glycerol) = an S-1,2-diacyl-sn-glyceryl-L-cysteinyl-[prolipoprotein] + sn-glycerol 1-phosphate + H(+). It participates in protein modification; lipoprotein biosynthesis (diacylglyceryl transfer). Catalyzes the transfer of the diacylglyceryl group from phosphatidylglycerol to the sulfhydryl group of the N-terminal cysteine of a prolipoprotein, the first step in the formation of mature lipoproteins. The chain is Phosphatidylglycerol--prolipoprotein diacylglyceryl transferase from Halalkalibacterium halodurans (strain ATCC BAA-125 / DSM 18197 / FERM 7344 / JCM 9153 / C-125) (Bacillus halodurans).